Reading from the N-terminus, the 1188-residue chain is Spermatogenesis-associated protein 31C1 (1188 aa).

A helical membrane pass occupies residues 23–43 (PWVLDIFLTLVFALGLFFLLL). Disordered stretches follow at residues 57-92 (PSPR…KNHS), 121-249 (LEKG…LLTP), 483-510 (PGTS…EAQT), 530-567 (TPQN…DSGS), 733-813 (MPER…PTVP), 934-1013 (NMGH…PSIS), 1121-1143 (QQAT…QQPL), and 1155-1188 (LRHP…HHHH). Composition is skewed to basic residues over residues 59-68 (PRKRKRHLVS) and 80-92 (RRGR…KNHS). Basic and acidic residues predominate over residues 138-154 (VGKRTPDGASRSSHEPM). Over residues 191 to 207 (SSLSASQPPEPSLLLER) the composition is skewed to low complexity. Residues 210–241 (PEPPALFPHPPHTPDPLACSPPPPKGFTPPPL) show a composition bias toward pro residues. Polar residues predominate over residues 495-510 (WQSSTSTGESSKEAQT). 2 stretches are compositionally biased toward polar residues: residues 783–800 (LKGS…SSRA) and 943–954 (PNCQGSCKSQSP). The span at 960–976 (HKRENSRKPNLEKHEEM) shows a compositional bias: basic and acidic residues. Residues 1121 to 1130 (QQATLKNQSR) show a composition bias toward polar residues.

Belongs to the SPATA31 family.

Its subcellular location is the membrane. Functionally, may play a role in spermatogenesis. In Homo sapiens (Human), this protein is Spermatogenesis-associated protein 31C1 (SPATA31C1).